The chain runs to 203 residues: Putative 3-methyladenine DNA glycosylase (203 aa).

This sequence belongs to the DNA glycosylase MPG family.

The protein is Putative 3-methyladenine DNA glycosylase of Staphylococcus saprophyticus subsp. saprophyticus (strain ATCC 15305 / DSM 20229 / NCIMB 8711 / NCTC 7292 / S-41).